We begin with the raw amino-acid sequence, 132 residues long: Small ribosomal subunit protein uS11 (132 aa).

This sequence belongs to the universal ribosomal protein uS11 family. Part of the 30S ribosomal subunit. Interacts with proteins S7 and S18. Binds to IF-3.

Functionally, located on the platform of the 30S subunit, it bridges several disparate RNA helices of the 16S rRNA. Forms part of the Shine-Dalgarno cleft in the 70S ribosome. This chain is Small ribosomal subunit protein uS11, found in Bifidobacterium animalis subsp. lactis (strain AD011).